Consider the following 350-residue polypeptide: Farnesyl pyrophosphate synthase (350 aa).

Residues Lys-55, Arg-58, and Gln-94 each coordinate isopentenyl diphosphate. Asp-101 and Asp-105 together coordinate Mg(2+). Position 110 (Arg-110) interacts with dimethylallyl diphosphate. Residue Arg-111 coordinates isopentenyl diphosphate. Positions 198, 199, 237, 254, and 263 each coordinate dimethylallyl diphosphate.

The protein belongs to the FPP/GGPP synthase family. Mg(2+) is required as a cofactor.

It is found in the cytoplasm. The enzyme catalyses isopentenyl diphosphate + dimethylallyl diphosphate = (2E)-geranyl diphosphate + diphosphate. It catalyses the reaction isopentenyl diphosphate + (2E)-geranyl diphosphate = (2E,6E)-farnesyl diphosphate + diphosphate. Its pathway is isoprenoid biosynthesis; farnesyl diphosphate biosynthesis; farnesyl diphosphate from geranyl diphosphate and isopentenyl diphosphate: step 1/1. The protein operates within isoprenoid biosynthesis; geranyl diphosphate biosynthesis; geranyl diphosphate from dimethylallyl diphosphate and isopentenyl diphosphate: step 1/1. Its function is as follows. Catalyzes the sequential condensation of isopentenyl pyrophosphate with the allylic pyrophosphates, dimethylallyl pyrophosphate, and then with the resultant geranylpyrophosphate to the ultimate product farnesyl pyrophosphate. The chain is Farnesyl pyrophosphate synthase (FPS) from Zea mays (Maize).